The primary structure comprises 287 residues: MSEKHIDEFSGVETTGHEWDGIRELNNPMPRWWVWTFYATIVWALGYAIAYPAIPMITDATKGMLGFSSRAELQQNLDQAKASQTTLHDLIAAKTVHEIDSDSALREFAIAGGASAFKVNCATCHGSGASGGPGFPNLNDDDWLWGGDLDAIQATIAHGIRFDGDTDTHASEMPPFAEVLDPLQTRQVAAYVWGLTNTPSDPGLAEAGKQVFVDNCAACHGDDAKGKAEMGAPDLADAIWLKARGEDAIIRQVAAPKHGVMPAWAGRLGDTTVKELTIFVHSLGGGT.

Over 1–36 (MSEKHIDEFSGVETTGHEWDGIRELNNPMPRWWVWT) the chain is Cytoplasmic. Residues 37–57 (FYATIVWALGYAIAYPAIPMI) form a helical membrane-spanning segment. Residues 58–287 (TDATKGMLGF…IFVHSLGGGT (230 aa)) lie on the Periplasmic side of the membrane. Cytochrome c domains follow at residues 108-196 (FAIA…WGLT) and 203-284 (GLAE…HSLG). Heme c contacts are provided by C121, C124, H125, M173, C216, C219, H220, and M261.

It belongs to the CcoP / FixP family. As to quaternary structure, component of the cbb3-type cytochrome c oxidase at least composed of FixN, FixO, FixQ and FixP. It depends on heme c as a cofactor.

The protein resides in the cell inner membrane. The protein operates within energy metabolism; oxidative phosphorylation. Functionally, C-type cytochrome. Part of the cbb3-type cytochrome c oxidase complex. FixP subunit is required for transferring electrons from donor cytochrome c via its heme groups to FixO subunit. From there, electrons are shuttled to the catalytic binuclear center of FixN subunit where oxygen reduction takes place. The complex also functions as a proton pump. In Rhizobium leguminosarum bv. viciae, this protein is Cbb3-type cytochrome c oxidase subunit FixPc.